The sequence spans 278 residues: Acyl-[acyl-carrier-protein]--UDP-N-acetylglucosamine O-acyltransferase (278 aa).

It belongs to the transferase hexapeptide repeat family. LpxA subfamily. As to quaternary structure, homotrimer.

Its subcellular location is the cytoplasm. The enzyme catalyses a (3R)-hydroxyacyl-[ACP] + UDP-N-acetyl-alpha-D-glucosamine = a UDP-3-O-[(3R)-3-hydroxyacyl]-N-acetyl-alpha-D-glucosamine + holo-[ACP]. It functions in the pathway glycolipid biosynthesis; lipid IV(A) biosynthesis; lipid IV(A) from (3R)-3-hydroxytetradecanoyl-[acyl-carrier-protein] and UDP-N-acetyl-alpha-D-glucosamine: step 1/6. Involved in the biosynthesis of lipid A, a phosphorylated glycolipid that anchors the lipopolysaccharide to the outer membrane of the cell. In Brucella abortus (strain S19), this protein is Acyl-[acyl-carrier-protein]--UDP-N-acetylglucosamine O-acyltransferase.